A 155-amino-acid polypeptide reads, in one-letter code: SsrA-binding protein (155 aa).

Positions 123–142 (DLHDKRETEKKRDWEREKGQ) are enriched in basic and acidic residues. The tract at residues 123 to 155 (DLHDKRETEKKRDWEREKGQLMRHKISSPRKDT) is disordered. Basic residues predominate over residues 143–155 (LMRHKISSPRKDT).

The protein belongs to the SmpB family.

The protein resides in the cytoplasm. Its function is as follows. Required for rescue of stalled ribosomes mediated by trans-translation. Binds to transfer-messenger RNA (tmRNA), required for stable association of tmRNA with ribosomes. tmRNA and SmpB together mimic tRNA shape, replacing the anticodon stem-loop with SmpB. tmRNA is encoded by the ssrA gene; the 2 termini fold to resemble tRNA(Ala) and it encodes a 'tag peptide', a short internal open reading frame. During trans-translation Ala-aminoacylated tmRNA acts like a tRNA, entering the A-site of stalled ribosomes, displacing the stalled mRNA. The ribosome then switches to translate the ORF on the tmRNA; the nascent peptide is terminated with the 'tag peptide' encoded by the tmRNA and targeted for degradation. The ribosome is freed to recommence translation, which seems to be the essential function of trans-translation. The protein is SsrA-binding protein of Methylibium petroleiphilum (strain ATCC BAA-1232 / LMG 22953 / PM1).